The chain runs to 500 residues: Low-density lipoprotein receptor-related protein 11 (500 aa).

Positions 1-37 (MASVAQESAGSQRRLPPRHGALRGLLLLCLWLPSGRA) are cleaved as a signal peptide. Residues 38-450 (ALPPAAPLSE…GGEHPAPETG (413 aa)) lie on the Extracellular side of the membrane. The MANSC domain occupies 99–184 (AMPDAIIRTK…FALHSGYSSY (86 aa)). N-linked (GlcNAc...) asparagine glycosylation is found at N164 and N291. Residues 210-305 (PLSKAGQDVV…VLRAAYSTGG (96 aa)) form the PKD domain. The 37-residue stretch at 309–345 (TCSRYHFFCDDGCCIDITLACDGVQQCPDGSDEDFCQ) folds into the LDL-receptor class A domain. 3 cysteine pairs are disulfide-bonded: C310/C322, C317/C335, and C329/C344. The segment at 358–445 (AASPALPRTT…KGDGGGGEHP (88 aa)) is disordered. N401 carries N-linked (GlcNAc...) asparagine glycosylation. Residues 451 to 473 (AVLPLALGLAITALLLLMVACRL) form a helical membrane-spanning segment. At 474-500 (RLVKQKLKKARPITSEESDYLINGMYL) the chain is on the cytoplasmic side. Residue S491 is modified to Phosphoserine.

Belongs to the LDLR family.

Its subcellular location is the membrane. In Homo sapiens (Human), this protein is Low-density lipoprotein receptor-related protein 11 (LRP11).